The following is a 267-amino-acid chain: Sulfate transporter CysZ (267 aa).

Transmembrane regions (helical) follow at residues 29-49 (FVIM…WLFI), 73-93 (ILLI…FTTL), 149-169 (IILF…PIIV), and 212-232 (GLVM…PVAV).

The protein belongs to the CysZ family.

The protein localises to the cell inner membrane. High affinity, high specificity proton-dependent sulfate transporter, which mediates sulfate uptake. Provides the sulfur source for the cysteine synthesis pathway. This is Sulfate transporter CysZ from Pasteurella multocida (strain Pm70).